A 212-amino-acid chain; its full sequence is MTDLSDIRREYTKGGLRRSELPEDPMALFERWMEQAKAAELTDPTAMCVATVDELGQPYQRIVLLKRFDEQGFVFFTNLGSRKATQLKHNAHISLLFPWHPLERQVAVTGIAEPLSTAEVLKYFVTRPKDSQIAAWVSAQSSKLSARQVLEAKFMEMKQKFSAGEVPLPSFWGGYLVRPASIEFWQGGEHRLHDRFIYEKTAAGWDIERLAP.

Residues 8-11 and K66 contribute to the substrate site; that span reads RREY. FMN is bound by residues 61–66, 76–77, R82, K83, and Q105; these read RIVLLK and FT. Y123, R127, and S131 together coordinate substrate. Residues 140–141 and W185 contribute to the FMN site; that span reads QS. 191 to 193 provides a ligand contact to substrate; it reads RLH. Position 195 (R195) interacts with FMN.

Belongs to the pyridoxamine 5'-phosphate oxidase family. Homodimer. FMN is required as a cofactor.

It carries out the reaction pyridoxamine 5'-phosphate + O2 + H2O = pyridoxal 5'-phosphate + H2O2 + NH4(+). The enzyme catalyses pyridoxine 5'-phosphate + O2 = pyridoxal 5'-phosphate + H2O2. The protein operates within cofactor metabolism; pyridoxal 5'-phosphate salvage; pyridoxal 5'-phosphate from pyridoxamine 5'-phosphate: step 1/1. It functions in the pathway cofactor metabolism; pyridoxal 5'-phosphate salvage; pyridoxal 5'-phosphate from pyridoxine 5'-phosphate: step 1/1. Functionally, catalyzes the oxidation of either pyridoxine 5'-phosphate (PNP) or pyridoxamine 5'-phosphate (PMP) into pyridoxal 5'-phosphate (PLP). This Shewanella amazonensis (strain ATCC BAA-1098 / SB2B) protein is Pyridoxine/pyridoxamine 5'-phosphate oxidase.